The primary structure comprises 512 residues: Cytochrome P450 1A1 (512 aa).

The segment at 29-40 (SRPRVPKGLKNP) is mitochondrial targeting signal. Serine 67 carries O-linked (GlcNAc) serine glycosylation. Phenylalanine 224 contacts substrate. Cysteine 457 is a binding site for heme.

The protein belongs to the cytochrome P450 family. In terms of assembly, interacts with cytosolic chaperones HSP70 and HSP90; this interaction is required for initial targeting to mitochondria. Interacts (via mitochondrial targeting signal) with TOMM40 (via N-terminus); this interaction is required for translocation across the mitochondrial outer membrane. It depends on heme as a cofactor.

Its subcellular location is the endoplasmic reticulum membrane. It is found in the mitochondrion inner membrane. The protein resides in the microsome membrane. It localises to the cytoplasm. It catalyses the reaction an organic molecule + reduced [NADPH--hemoprotein reductase] + O2 = an alcohol + oxidized [NADPH--hemoprotein reductase] + H2O + H(+). The catalysed reaction is estrone + reduced [NADPH--hemoprotein reductase] + O2 = 2-hydroxyestrone + oxidized [NADPH--hemoprotein reductase] + H2O + H(+). The enzyme catalyses estrone + reduced [NADPH--hemoprotein reductase] + O2 = 4-hydroxyestrone + oxidized [NADPH--hemoprotein reductase] + H2O + H(+). It carries out the reaction estrone + reduced [NADPH--hemoprotein reductase] + O2 = 6alpha-hydroxyestrone + oxidized [NADPH--hemoprotein reductase] + H2O + H(+). It catalyses the reaction estrone + reduced [NADPH--hemoprotein reductase] + O2 = 15alpha-hydroxyestrone + oxidized [NADPH--hemoprotein reductase] + H2O + H(+). The catalysed reaction is estrone + reduced [NADPH--hemoprotein reductase] + O2 = 16alpha-hydroxyestrone + oxidized [NADPH--hemoprotein reductase] + H2O + H(+). The enzyme catalyses 17beta-estradiol + reduced [NADPH--hemoprotein reductase] + O2 = 2-hydroxy-17beta-estradiol + oxidized [NADPH--hemoprotein reductase] + H2O + H(+). It carries out the reaction 17beta-estradiol + reduced [NADPH--hemoprotein reductase] + O2 = 4-hydroxy-17beta-estradiol + oxidized [NADPH--hemoprotein reductase] + H2O + H(+). It catalyses the reaction 17beta-estradiol + reduced [NADPH--hemoprotein reductase] + O2 = 6alpha-hydroxy-17beta-estradiol + oxidized [NADPH--hemoprotein reductase] + H2O + H(+). The catalysed reaction is 17beta-estradiol + reduced [NADPH--hemoprotein reductase] + O2 = 7alpha-hydroxy-17beta-estradiol + oxidized [NADPH--hemoprotein reductase] + H2O + H(+). The enzyme catalyses 17beta-estradiol + reduced [NADPH--hemoprotein reductase] + O2 = 15alpha-hydroxy-17beta-estradiol + oxidized [NADPH--hemoprotein reductase] + H2O + H(+). It carries out the reaction (5Z,8Z,11Z)-eicosatrienoate + reduced [NADPH--hemoprotein reductase] + O2 = 19-hydroxy-(5Z,8Z,11Z)-eicosatrienoate + oxidized [NADPH--hemoprotein reductase] + H2O + H(+). It catalyses the reaction (5Z,8Z,11Z,14Z)-eicosatetraenoate + reduced [NADPH--hemoprotein reductase] + O2 = 16-hydroxy-(5Z,8Z,11Z,14Z)-eicosatetraenoate + oxidized [NADPH--hemoprotein reductase] + H2O + H(+). The catalysed reaction is (5Z,8Z,11Z,14Z)-eicosatetraenoate + reduced [NADPH--hemoprotein reductase] + O2 = 17-hydroxy-(5Z,8Z,11Z,14Z)-eicosatetraenoate + oxidized [NADPH--hemoprotein reductase] + H2O + H(+). The enzyme catalyses (5Z,8Z,11Z,14Z)-eicosatetraenoate + reduced [NADPH--hemoprotein reductase] + O2 = 18-hydroxy-(5Z,8Z,11Z,14Z)-eicosatetraenoate + oxidized [NADPH--hemoprotein reductase] + H2O + H(+). It carries out the reaction (5Z,8Z,11Z,14Z)-eicosatetraenoate + reduced [NADPH--hemoprotein reductase] + O2 = 19-hydroxy-(5Z,8Z,11Z,14Z)-eicosatetraenoate + oxidized [NADPH--hemoprotein reductase] + H2O + H(+). It catalyses the reaction (5Z,8Z,11Z,14Z,17Z)-eicosapentaenoate + reduced [NADPH--hemoprotein reductase] + O2 = 19-hydroxy-(5Z,8Z,11Z,14Z,17Z)-eicosapentaenoate + oxidized [NADPH--hemoprotein reductase] + H2O + H(+). The catalysed reaction is (5Z,8Z,11Z,14Z)-eicosatetraenoate + reduced [NADPH--hemoprotein reductase] + O2 = (8R,9S)-epoxy-(5Z,11Z,14Z)-eicosatrienoate + oxidized [NADPH--hemoprotein reductase] + H2O + H(+). The enzyme catalyses (5Z,8Z,11Z,14Z)-eicosatetraenoate + reduced [NADPH--hemoprotein reductase] + O2 = (11R,12S)-epoxy-(5Z,8Z,14Z)-eicosatrienoate + oxidized [NADPH--hemoprotein reductase] + H2O + H(+). It carries out the reaction (5Z,8Z,11Z,14Z)-eicosatetraenoate + reduced [NADPH--hemoprotein reductase] + O2 = (14S,15R)-epoxy-(5Z,8Z,11Z)-eicosatrienoate + oxidized [NADPH--hemoprotein reductase] + H2O + H(+). It catalyses the reaction (5Z,8Z,11Z,14Z)-eicosatetraenoate + reduced [NADPH--hemoprotein reductase] + O2 = (14R,15S)-epoxy-(5Z,8Z,11Z)-eicosatrienoate + oxidized [NADPH--hemoprotein reductase] + H2O + H(+). The catalysed reaction is (5Z,8Z,11Z,14Z,17Z)-eicosapentaenoate + reduced [NADPH--hemoprotein reductase] + O2 = (17R,18S)-epoxy-(5Z,8Z,11Z,14Z)-eicosatetraenoate + oxidized [NADPH--hemoprotein reductase] + H2O + H(+). The enzyme catalyses (4Z,7Z,10Z,13Z,16Z,19Z)-docosahexaenoate + reduced [NADPH--hemoprotein reductase] + O2 = (19S,20R)-epoxy-(4Z,7Z,10Z,13Z,16Z)-docosapentaenoate + oxidized [NADPH--hemoprotein reductase] + H2O + H(+). It carries out the reaction (4Z,7Z,10Z,13Z,16Z,19Z)-docosahexaenoate + reduced [NADPH--hemoprotein reductase] + O2 = (19R,20S)-epoxy-(4Z,7Z,10Z,13Z,16Z)-docosapentaenoate + oxidized [NADPH--hemoprotein reductase] + H2O + H(+). It catalyses the reaction all-trans-retinol + reduced [NADPH--hemoprotein reductase] + O2 = all-trans-retinal + oxidized [NADPH--hemoprotein reductase] + 2 H2O + H(+). The catalysed reaction is all-trans-retinal + reduced [NADPH--hemoprotein reductase] + O2 = all-trans-retinoate + oxidized [NADPH--hemoprotein reductase] + H2O + 2 H(+). The enzyme catalyses (13S)-hydroperoxy-(9Z,11E)-octadecadienoate = 13-oxo-(9Z,11E)-octadecadienoate + H2O. It carries out the reaction (12S)-hydroperoxy-(5Z,8Z,10E,14Z)-eicosatetraenoate = 12-oxo-(5Z,8Z,10E,14Z)-eicosatetraenoate + H2O. It catalyses the reaction (15S)-hydroperoxy-(5Z,8Z,11Z,13E)-eicosatetraenoate = 15-oxo-(5Z,8Z,11Z,13E)-eicosatetraenoate + H2O. The catalysed reaction is (5S)-hydroperoxy-(6E,8Z,11Z,14Z)-eicosatetraenoate = 5-oxo-(6E,8Z,11Z,14Z)-eicosatetraenoate + H2O. Its pathway is steroid hormone biosynthesis. It functions in the pathway lipid metabolism; fatty acid metabolism. It participates in cofactor metabolism; retinol metabolism. Its function is as follows. A cytochrome P450 monooxygenase involved in the metabolism of various endogenous substrates, including fatty acids, steroid hormones and vitamins. Mechanistically, uses molecular oxygen inserting one oxygen atom into a substrate, and reducing the second into a water molecule, with two electrons provided by NADPH via cytochrome P450 reductase (CPR; NADPH-ferrihemoprotein reductase). Catalyzes the hydroxylation of carbon-hydrogen bonds. Exhibits high catalytic activity for the formation of hydroxyestrogens from estrone (E1) and 17beta-estradiol (E2), namely 2-hydroxy E1 and E2, as well as D-ring hydroxylated E1 and E2 at the C15alpha and C16alpha positions. Displays different regioselectivities for polyunsaturated fatty acids (PUFA) hydroxylation. Catalyzes the epoxidation of double bonds of certain PUFA. Converts arachidonic acid toward epoxyeicosatrienoic acid (EET) regioisomers, 8,9-, 11,12-, and 14,15-EET, that function as lipid mediators in the vascular system. Displays an absolute stereoselectivity in the epoxidation of eicosapentaenoic acid (EPA) producing the 17(R),18(S) enantiomer. May play an important role in all-trans retinoic acid biosynthesis in extrahepatic tissues. Catalyzes two successive oxidative transformation of all-trans retinol to all-trans retinal and then to the active form all-trans retinoic acid. May also participate in eicosanoids metabolism by converting hydroperoxide species into oxo metabolites (lipoxygenase-like reaction, NADPH-independent). The chain is Cytochrome P450 1A1 (CYP1A1) from Macaca fascicularis (Crab-eating macaque).